The sequence spans 551 residues: Calcium-dependent protein kinase 19 (551 aa).

Residue Gly2 is the site of N-myristoyl glycine attachment. A disordered region spans residues 12 to 46 (VKKPTPDISGEQNTEVKSREITPKEQPRQRQPAPR). Over residues 25-39 (TEVKSREITPKEQPR) the composition is skewed to basic and acidic residues. Residues 98-357 (YSLGRELGRG…AAQVLEHPWI (260 aa)) enclose the Protein kinase domain. ATP-binding positions include 104-112 (LGRGQFGIT) and Lys127. Asp222 serves as the catalytic Proton acceptor. Position 263 is a phosphoserine (Ser263). The tract at residues 363–393 (ASDKPIDSAVLSRMKQLRAMNKLKKLAFKFI) is autoinhibitory domain. EF-hand domains are found at residues 400-435 (EELK…LGSR), 436-471 (LTET…RFRV), 472-507 (ERED…YNMG), and 512-542 (IKEI…CSQS). 19 residues coordinate Ca(2+): Asp413, Asp415, Ser417, Thr419, Glu424, Asp449, Asp451, Asn453, Thr455, Glu460, Asp485, Asp487, Ser489, Glu496, Asp520, Asp522, Asp524, Ser526, and Glu531.

Belongs to the protein kinase superfamily. Ser/Thr protein kinase family. CDPK subfamily.

The protein resides in the membrane. The catalysed reaction is L-seryl-[protein] + ATP = O-phospho-L-seryl-[protein] + ADP + H(+). The enzyme catalyses L-threonyl-[protein] + ATP = O-phospho-L-threonyl-[protein] + ADP + H(+). Its activity is regulated as follows. Activated by calcium. Autophosphorylation may play an important role in the regulation of the kinase activity. In terms of biological role, may play a role in signal transduction pathways that involve calcium as a second messenger. The polypeptide is Calcium-dependent protein kinase 19 (CPK19) (Arabidopsis thaliana (Mouse-ear cress)).